Consider the following 1088-residue polypeptide: Calcium-transporting ATPase 5, plasma membrane-type (1088 aa).

Over residues 1–11 the composition is skewed to low complexity; sequence MESASSSLATS. The disordered stretch occupies residues 1-32; it reads MESASSSLATSGRRRSSSGGGGGSWGSIGSAA. At 1–198 the chain is on the cytoplasmic side; it reads MESASSSLAT…FLWDACKDLT (198 aa). Residues 199–219 traverse the membrane as a helical segment; sequence LIILMVAAAVSLALGITTEGI. The Extracellular segment spans residues 220–221; the sequence is KE. A helical membrane pass occupies residues 222–242; it reads GWYDGASIAFAVLLVVVVTAT. Over 243–338 the chain is Cytoplasmic; the sequence is SDYKQSLQFQ…MSGCKVADGY (96 aa). A helical transmembrane segment spans residues 339-359; that stretch reads GTMLVTAVGINTEWGLLMASI. At 360 to 375 the chain is on the extracellular side; sequence SEDSGEETPLQVRLNG. Residues 376–396 traverse the membrane as a helical segment; it reads VATFIGMVGLSVALAVLVVLL. The Cytoplasmic segment spans residues 397 to 425; the sequence is ARYFTGHTYNPDGSVQYVKGKMGVGQTIR. Residues 426-446 form a helical membrane-spanning segment; sequence GIVGIFTVAVTIVVVAVPEGL. Topologically, residues 447–851 are extracellular; it reads PLAVTLTLAF…GRSVYANIQK (405 aa). Catalysis depends on Asp486, which acts as the 4-aspartylphosphate intermediate. N-linked (GlcNAc...) asparagine glycans are attached at residues Asn532, Asn569, and Asn737. Asp794 and Asp798 together coordinate Mg(2+). A helical transmembrane segment spans residues 852 to 872; sequence FIQFQLTVNVAALIINVVAAV. At 873–880 the chain is on the cytoplasmic side; the sequence is SSGNVPLN. Residues 881-901 form a helical membrane-spanning segment; it reads AVQLLWVNLIMDTLGALALAT. Residues 902–919 are Extracellular-facing; the sequence is EPPTDHLMQRPPVGRREP. Residues 920 to 940 form a helical membrane-spanning segment; it reads LITNVMWRNLIIMALFQVIVL. At 941 to 1000 the chain is on the cytoplasmic side; that stretch reads LTLNFRGTSLLQLKNDNQAHADKVKNTFIFNTFVLCQVFNEFNARKPDELNIFKGITGNH. A helical membrane pass occupies residues 1001-1021; the sequence is LFMAIVAITVVLQALIVEFLG. The Extracellular portion of the chain corresponds to 1022-1030; it reads KFTSTTRLT. The chain crosses the membrane as a helical span at residues 1031-1051; sequence WQLWLVSIGLAFFSWPLAFVG. At 1052–1088 the chain is on the cytoplasmic side; sequence KLIPVPERPLGDFFACCCPGSKQAADAKGDDADHSDV.

Belongs to the cation transport ATPase (P-type) (TC 3.A.3) family. Type IIB subfamily. As to quaternary structure, interacts with NOH1.

The protein resides in the cell membrane. The catalysed reaction is Ca(2+)(in) + ATP + H2O = Ca(2+)(out) + ADP + phosphate + H(+). Its activity is regulated as follows. Activated by calmodulin. Functionally, this magnesium-dependent enzyme catalyzes the hydrolysis of ATP coupled with the translocation of calcium from the cytosol out of the cell, into the endoplasmic reticulum, or into organelles. Involved in salt and drought stress tolerance. Involved in cold stress tolerance. This is Calcium-transporting ATPase 5, plasma membrane-type from Oryza sativa subsp. japonica (Rice).